A 245-amino-acid chain; its full sequence is tRNA1(Val) (adenine(37)-N6)-methyltransferase (245 aa).

Belongs to the methyltransferase superfamily. tRNA (adenine-N(6)-)-methyltransferase family.

The protein resides in the cytoplasm. The enzyme catalyses adenosine(37) in tRNA1(Val) + S-adenosyl-L-methionine = N(6)-methyladenosine(37) in tRNA1(Val) + S-adenosyl-L-homocysteine + H(+). Its function is as follows. Specifically methylates the adenine in position 37 of tRNA(1)(Val) (anticodon cmo5UAC). The sequence is that of tRNA1(Val) (adenine(37)-N6)-methyltransferase from Shigella dysenteriae serotype 1 (strain Sd197).